Consider the following 502-residue polypeptide: Calnexin homolog (502 aa).

The N-terminal stretch at 1 to 19 is a signal peptide; that stretch reads MKFSAYLWWLFLNLALVKG. At 20–481 the chain is on the lumenal side; it reads TSLLSNVTLA…IDRILEQPLK (462 aa). N-linked (GlcNAc...) asparagine glycans are attached at residues asparagine 25 and asparagine 104. Cysteine 125 and cysteine 161 are oxidised to a cystine. Residues lysine 131 and aspartate 159 each contribute to the an alpha-D-glucoside site. The segment at 248-381 is p domain (Extended arm); that stretch reads IPDVSVAKPH…PEIENPLYYE (134 aa). 5 repeat units span residues 250–261, 267–278, 286–297, 305–316, and 320–330. 2 4 X approximate repeats regions span residues 250–316 and 320–377; these read DVSV…WWKE and GEWI…IENP. The N-linked (GlcNAc...) asparagine glycan is linked to asparagine 296. An intrachain disulfide couples cysteine 332 to cysteine 338. Tandem repeats lie at residues 339-349, 353-363, and 367-377. Position 398 (glutamate 398) interacts with an alpha-D-glucoside. Asparagine 416 and asparagine 425 each carry an N-linked (GlcNAc...) asparagine glycan. A helical transmembrane segment spans residues 482–502; that stretch reads FVLTAAVVLLTTSVLCCVVFT.

The protein belongs to the calreticulin family. In terms of assembly, interacts with MPD1.

The protein resides in the endoplasmic reticulum membrane. In terms of biological role, interacts with newly synthesized monoglucosylated glycoproteins in the endoplasmic reticulum. It may act in assisting protein assembly and/or in the retention within the ER of unassembled protein subunits. It seems to play a major role in the quality control apparatus of the ER by the retention of incorrectly folded proteins. This Saccharomyces cerevisiae (strain ATCC 204508 / S288c) (Baker's yeast) protein is Calnexin homolog (CNE1).